Here is a 341-residue protein sequence, read N- to C-terminus: MKSLAKLKAEPGIWLTRTEKPKLGHNDLLIKIKKTAICGTDIHIYNWDEWAQKTVPTPMVVGHEYAGEVVGIGQEVKGFTLGDRVSGEGHITCGHCRNCRGGRTHLCRNTVGVGVNRAGSFAEYLVIPAYNAFKLPDEISDDLASIFDPFGNAVHTALSFDLVGEDVLITGAGPIGIMAAAVAKHVGARHVVITDINEYRLDLARKMGATRAVDVSKESLKDVMTDLGMTEGFDVGMEMSGVPMAFTSMLESMNNGGKIAMLGIPGSDMAIDWSQVIFKGLTIKGIYGREMFETWYKMASLIQSGLDLTPIITHHYNIDDFQQGFDMMRSGQSGKVILDWT.

Cys38 is a binding site for Zn(2+). Catalysis depends on charge relay system residues Thr40 and His43. Residues His63, Glu64, Cys93, Cys96, Cys99, and Cys107 each coordinate Zn(2+). NAD(+) is bound by residues Ile175, Asp195, Arg200, Leu262 to Ile264, and Ile286 to Tyr287.

The protein belongs to the zinc-containing alcohol dehydrogenase family. As to quaternary structure, homotetramer. Zn(2+) is required as a cofactor.

It is found in the cytoplasm. It carries out the reaction L-threonine + NAD(+) = (2S)-2-amino-3-oxobutanoate + NADH + H(+). It functions in the pathway amino-acid degradation; L-threonine degradation via oxydo-reductase pathway; glycine from L-threonine: step 1/2. Its function is as follows. Catalyzes the NAD(+)-dependent oxidation of L-threonine to 2-amino-3-ketobutyrate. The protein is L-threonine 3-dehydrogenase of Colwellia psychrerythraea (strain 34H / ATCC BAA-681) (Vibrio psychroerythus).